We begin with the raw amino-acid sequence, 223 residues long: 26S proteasome non-ATPase regulatory subunit 9 (223 aa).

The segment covering 103–121 (RDKEKQARDMAEAHKEAMS) has biased composition (basic and acidic residues). Residues 103-141 (RDKEKQARDMAEAHKEAMSRKLGQSESQGPPRAFAKVNS) form a disordered region. The PDZ domain occupies 108-195 (QARDMAEAHK…KPLNVTVIRR (88 aa)). Residue S129 is modified to Phosphoserine.

Belongs to the proteasome subunit p27 family. Interacts with PSMC3. Part of a transient complex (modulator) containing PSMD9, PSMC6 and PSMC3 formed during the assembly of the 26S proteasome. Expressed in all tissues tested, highly expressed in liver and kidney.

Functionally, acts as a chaperone during the assembly of the 26S proteasome, specifically of the base subcomplex of the PA700/19S regulatory complex (RC). During the base subcomplex assembly is part of an intermediate PSMD9:PSMC6:PSMC3 module, also known as modulator trimer complex; PSMD9 is released during the further base assembly process. The polypeptide is 26S proteasome non-ATPase regulatory subunit 9 (PSMD9) (Homo sapiens (Human)).